A 233-amino-acid polypeptide reads, in one-letter code: Small ribosomal subunit protein uS3 (233 aa).

Positions 39-107 (VRQFLTKELS…PAQINIAEVR (69 aa)) constitute a KH type-2 domain.

Belongs to the universal ribosomal protein uS3 family. Part of the 30S ribosomal subunit. Forms a tight complex with proteins S10 and S14.

Functionally, binds the lower part of the 30S subunit head. Binds mRNA in the 70S ribosome, positioning it for translation. The chain is Small ribosomal subunit protein uS3 from Vibrio vulnificus (strain CMCP6).